Here is a 408-residue protein sequence, read N- to C-terminus: Snake venom 5'-nucleotidase (408 aa).

Residues His-54 and His-77 each contribute to the Zn(2+) site. Asn-167 and Asn-181 each carry an N-linked (GlcNAc...) asparagine glycan. Disulfide bonds link Cys-187-Cys-192 and Cys-199-Cys-221. An AMP-binding site is contributed by Arg-188. Residues Asn-224, Arg-229, and Phe-252 each coordinate AMP. Cys-311 and Cys-314 are joined by a disulfide. The AMP site is built by Phe-335 and Asp-341. Propeptides (removed in mature form) lie at residues 385–388 (DGTL) and 385–408 (DGTLFQAQLFLTWGLCISLLFFIL).

Belongs to the 5'-nucleotidase family. In terms of assembly, homodimer. Venom 5'-nucleotidases (or a part thereof) may be released into the venom via exosome-like vesicles. They may be attached via a GPI anchor to the membrane of these vesicles. Soluble forms of 5'-nucleotidase might be released by cleavage of the ectodomain in the exosome-like vesicles or venom gland cells. Expressed by the venom gland.

It is found in the membrane. The enzyme catalyses a ribonucleoside 5'-phosphate + H2O = a ribonucleoside + phosphate. It catalyses the reaction AMP + H2O = adenosine + phosphate. The catalysed reaction is GMP + H2O = guanosine + phosphate. It carries out the reaction ADP + H2O = AMP + phosphate + H(+). Is potently inhibited by metal ions Fe(3+), Cu(2+) and Zn(2+). Is enhanced by Mn(2+). Ca(2+) and Mg(2+) have no effect. Functionally, hydrolyzes nucleotides into nucleosides. Prefers AMP as the substrate but also cleaves GMP and ADP. Does not affect AMP, cAMP and cGMP. Inhibits ADP- and collagen-induced platelet aggregation. Snake venom 5'-nucleotidases are widely distributed among venomous snake taxa, but there is a lack of information about their biological activities. They have been shown to inhibit platelet aggregation. This effect may be due to the liberation of inhibitory AMP or adenosine by its action on ADP released upon initiation of aggregation. Venom 5'-nucleotidases are also known to synergistically act in vivo with other toxins like ADPases, phospholipases, and disintegrins to exert a more pronounced anti-coagulant effect. This is Snake venom 5'-nucleotidase from Macrovipera lebetinus (Levantine viper).